The sequence spans 332 residues: UPF0194 membrane protein YbhG (332 aa).

Residues 1–16 (MMKKPVVIGLAVVVLA) form the signal peptide. The stretch at 108–209 (EEIAQAAAAV…LNLQDSTLIA (102 aa)) forms a coiled coil.

It belongs to the UPF0194 family.

The protein localises to the periplasm. This Escherichia coli (strain 55989 / EAEC) protein is UPF0194 membrane protein YbhG.